The primary structure comprises 248 residues: Probable transcriptional regulatory protein MCA1220 (248 aa).

It belongs to the TACO1 family.

Its subcellular location is the cytoplasm. This is Probable transcriptional regulatory protein MCA1220 from Methylococcus capsulatus (strain ATCC 33009 / NCIMB 11132 / Bath).